A 337-amino-acid chain; its full sequence is Biotin synthase (337 aa).

Positions 55–284 (YFKNTIELCS…KKTILLAGGK (230 aa)) constitute a Radical SAM core domain. [4Fe-4S] cluster is bound by residues cysteine 73, cysteine 77, and cysteine 80. 3 residues coordinate [2Fe-2S] cluster: cysteine 117, cysteine 149, and cysteine 209.

It belongs to the radical SAM superfamily. Biotin synthase family. Homodimer. [4Fe-4S] cluster serves as cofactor. Requires [2Fe-2S] cluster as cofactor.

The enzyme catalyses (4R,5S)-dethiobiotin + (sulfur carrier)-SH + 2 reduced [2Fe-2S]-[ferredoxin] + 2 S-adenosyl-L-methionine = (sulfur carrier)-H + biotin + 2 5'-deoxyadenosine + 2 L-methionine + 2 oxidized [2Fe-2S]-[ferredoxin]. The protein operates within cofactor biosynthesis; biotin biosynthesis; biotin from 7,8-diaminononanoate: step 2/2. Functionally, catalyzes the conversion of dethiobiotin (DTB) to biotin by the insertion of a sulfur atom into dethiobiotin via a radical-based mechanism. In Caldicellulosiruptor bescii (strain ATCC BAA-1888 / DSM 6725 / KCTC 15123 / Z-1320) (Anaerocellum thermophilum), this protein is Biotin synthase.